We begin with the raw amino-acid sequence, 329 residues long: NADH-quinone oxidoreductase subunit H (329 aa).

Helical transmembrane passes span 9-29 (LIKI…ATYI), 42-62 (GPCY…IKLF), 75-95 (FIFT…MAPI), 117-137 (IGFL…ILAG), 154-174 (IQLL…LMVV), 188-208 (GGFL…FLIA), 238-258 (LKWG…SFVI), 269-291 (WGFI…LSMW), and 309-329 (WKIM…IILI).

It belongs to the complex I subunit 1 family. In terms of assembly, NDH-1 is composed of 14 different subunits. Subunits NuoA, H, J, K, L, M, N constitute the membrane sector of the complex.

Its subcellular location is the cell inner membrane. It catalyses the reaction a quinone + NADH + 5 H(+)(in) = a quinol + NAD(+) + 4 H(+)(out). Its function is as follows. NDH-1 shuttles electrons from NADH, via FMN and iron-sulfur (Fe-S) centers, to quinones in the respiratory chain. The immediate electron acceptor for the enzyme in this species is believed to be ubiquinone. Couples the redox reaction to proton translocation (for every two electrons transferred, four hydrogen ions are translocated across the cytoplasmic membrane), and thus conserves the redox energy in a proton gradient. This subunit may bind ubiquinone. The chain is NADH-quinone oxidoreductase subunit H from Helicobacter pylori (strain P12).